A 548-amino-acid polypeptide reads, in one-letter code: CBS domain-containing protein CBSCBSPB4 (548 aa).

Residues Met1–Ser18 are compositionally biased toward polar residues. The disordered stretch occupies residues Met1–Ser58. Residue Ser18 is modified to Phosphoserine. A compositionally biased stretch (low complexity) spans Asp37–Glu56. CBS domains follow at residues Val63 to Glu126, Met133 to Val190, Ile233 to Glu293, and Met301 to Thr358. The 88-residue stretch at Pro411 to Thr498 folds into the PB1 domain. The chain crosses the membrane as a helical span at residues Ala521–Leu543.

It is found in the membrane. This is CBS domain-containing protein CBSCBSPB4 (CBSCBSPB4) from Arabidopsis thaliana (Mouse-ear cress).